A 634-amino-acid polypeptide reads, in one-letter code: Chaperone protein DnaK (634 aa).

Residue T197 is modified to Phosphothreonine; by autocatalysis. Positions I592–D634 are disordered. The span at G619–D634 shows a compositional bias: acidic residues.

It belongs to the heat shock protein 70 family.

Acts as a chaperone. In Prochlorococcus marinus (strain MIT 9515), this protein is Chaperone protein DnaK.